Consider the following 308-residue polypeptide: tRNA dimethylallyltransferase (308 aa).

9-16 provides a ligand contact to ATP; that stretch reads GPTAAGKT. Position 11 to 16 (11 to 16) interacts with substrate; sequence TAAGKT. 2 interaction with substrate tRNA regions span residues 34–37 and 158–162; these read DSMQ and QRLLR.

The protein belongs to the IPP transferase family. In terms of assembly, monomer. Mg(2+) is required as a cofactor.

It catalyses the reaction adenosine(37) in tRNA + dimethylallyl diphosphate = N(6)-dimethylallyladenosine(37) in tRNA + diphosphate. Its function is as follows. Catalyzes the transfer of a dimethylallyl group onto the adenine at position 37 in tRNAs that read codons beginning with uridine, leading to the formation of N6-(dimethylallyl)adenosine (i(6)A). This chain is tRNA dimethylallyltransferase, found in Maricaulis maris (strain MCS10) (Caulobacter maris).